A 255-amino-acid chain; its full sequence is MISLQETKIAVQNLNFYYEDFHALKNINLRIAKNKVTAFIGPSGCGKSTLLRSFNRMFELYPNQKATGEINLDGENLLTTKMDISLIRAKVGMVFQKPTPFPMSIYDNIAFGVRLFEKLSKEKMNERVEWALTKAALWNEVKDKLHKSGDSLSGGQQQRLCIARGIAIKPSVLLLDEPCSALDPISTMKIEELITELKQDYTVVIVTHNMQQATRCSDYTAFMYLGELVEFGQTQQIFDRPKIQRTEDYIRGKMG.

Residues I9–I250 enclose the ABC transporter domain. G41–S48 lines the ATP pocket.

This sequence belongs to the ABC transporter superfamily. Phosphate importer (TC 3.A.1.7) family. As to quaternary structure, the complex is composed of two ATP-binding proteins (PstB), two transmembrane proteins (PstC and PstA) and a solute-binding protein (PstS).

It localises to the cell inner membrane. It catalyses the reaction phosphate(out) + ATP + H2O = ADP + 2 phosphate(in) + H(+). Its function is as follows. Part of the ABC transporter complex PstSACB involved in phosphate import. Responsible for energy coupling to the transport system. This chain is Phosphate import ATP-binding protein PstB, found in Haemophilus influenzae (strain 86-028NP).